Consider the following 105-residue polypeptide: MNDSEFIQLADQLYQKIEEKIEESGADVDYDQNGSLLTLEFENHTKLIINRQQPLHQVWLATLENGHHYDYNNGKWIDDRSGDEFLTFLSAAIFKQSKETVDFTE.

The protein belongs to the frataxin family.

Involved in iron-sulfur (Fe-S) cluster assembly. May act as a regulator of Fe-S biogenesis. The polypeptide is Iron-sulfur cluster assembly protein CyaY (Psychromonas ingrahamii (strain DSM 17664 / CCUG 51855 / 37)).